A 208-amino-acid polypeptide reads, in one-letter code: Small ribosomal subunit protein uS4 (208 aa).

The region spanning 98-161 (RRLDNVVYRL…RKSKRFKEVF (64 aa)) is the S4 RNA-binding domain.

It belongs to the universal ribosomal protein uS4 family. In terms of assembly, part of the 30S ribosomal subunit. Contacts protein S5. The interaction surface between S4 and S5 is involved in control of translational fidelity.

Its function is as follows. One of the primary rRNA binding proteins, it binds directly to 16S rRNA where it nucleates assembly of the body of the 30S subunit. In terms of biological role, with S5 and S12 plays an important role in translational accuracy. This Halothermothrix orenii (strain H 168 / OCM 544 / DSM 9562) protein is Small ribosomal subunit protein uS4.